The following is a 228-amino-acid chain: Leucyl/phenylalanyl-tRNA--protein transferase (228 aa).

This sequence belongs to the L/F-transferase family.

The protein resides in the cytoplasm. It carries out the reaction N-terminal L-lysyl-[protein] + L-leucyl-tRNA(Leu) = N-terminal L-leucyl-L-lysyl-[protein] + tRNA(Leu) + H(+). It catalyses the reaction N-terminal L-arginyl-[protein] + L-leucyl-tRNA(Leu) = N-terminal L-leucyl-L-arginyl-[protein] + tRNA(Leu) + H(+). The catalysed reaction is L-phenylalanyl-tRNA(Phe) + an N-terminal L-alpha-aminoacyl-[protein] = an N-terminal L-phenylalanyl-L-alpha-aminoacyl-[protein] + tRNA(Phe). In terms of biological role, functions in the N-end rule pathway of protein degradation where it conjugates Leu, Phe and, less efficiently, Met from aminoacyl-tRNAs to the N-termini of proteins containing an N-terminal arginine or lysine. This chain is Leucyl/phenylalanyl-tRNA--protein transferase, found in Lawsonia intracellularis (strain PHE/MN1-00).